The primary structure comprises 286 residues: Putative 2-aminoethylphosphonate transport system permease protein PhnU (286 aa).

6 helical membrane passes run 19–39 (WLLL…SLIV), 76–96 (FFAT…LVFI), 111–131 (FIAL…GSAG), 150–170 (FLYS…PLVM), 202–222 (VIFP…LLLT), and 254–274 (YTVA…LFSL). The ABC transmembrane type-1 domain maps to 68-275 (LLNTLQIAFF…VLSLGLFSLY (208 aa)).

It belongs to the binding-protein-dependent transport system permease family.

It localises to the cell inner membrane. Functionally, probably part of the PhnSTUV complex (TC 3.A.1.11.5) involved in 2-aminoethylphosphonate import. Probably responsible for the translocation of the substrate across the membrane. This is Putative 2-aminoethylphosphonate transport system permease protein PhnU (phnU) from Salmonella typhimurium (strain LT2 / SGSC1412 / ATCC 700720).